Here is a 122-residue protein sequence, read N- to C-terminus: Large ribosomal subunit protein uL14 (122 aa).

This sequence belongs to the universal ribosomal protein uL14 family. Part of the 50S ribosomal subunit. Forms a cluster with proteins L3 and L19. In the 70S ribosome, L14 and L19 interact and together make contacts with the 16S rRNA in bridges B5 and B8.

Functionally, binds to 23S rRNA. Forms part of two intersubunit bridges in the 70S ribosome. The sequence is that of Large ribosomal subunit protein uL14 from Moorella thermoacetica (strain ATCC 39073 / JCM 9320).